The primary structure comprises 487 residues: N-succinylglutamate 5-semialdehyde dehydrogenase (487 aa).

221-226 (GSSRTG) lines the NAD(+) pocket. Active-site residues include Glu244 and Cys278.

It belongs to the aldehyde dehydrogenase family. AstD subfamily.

It catalyses the reaction N-succinyl-L-glutamate 5-semialdehyde + NAD(+) + H2O = N-succinyl-L-glutamate + NADH + 2 H(+). The protein operates within amino-acid degradation; L-arginine degradation via AST pathway; L-glutamate and succinate from L-arginine: step 4/5. Its function is as follows. Catalyzes the NAD-dependent reduction of succinylglutamate semialdehyde into succinylglutamate. The sequence is that of N-succinylglutamate 5-semialdehyde dehydrogenase from Pseudomonas putida (strain W619).